We begin with the raw amino-acid sequence, 446 residues long: Elongation factor Ts, mitochondrial (446 aa).

The N-terminal 33 residues, 1-33, are a transit peptide targeting the mitochondrion; that stretch reads MSGSRSALSVVRLAACAKPCTLGSTSSVLTRPF.

This sequence belongs to the EF-Ts family.

The protein resides in the mitochondrion. In terms of biological role, associates with the EF-Tu.GDP complex and induces the exchange of GDP to GTP. It remains bound to the aminoacyl-tRNA.EF-Tu.GTP complex up to the GTP hydrolysis stage on the ribosome. The chain is Elongation factor Ts, mitochondrial from Mycosarcoma maydis (Corn smut fungus).